The primary structure comprises 1108 residues: Alpha-mannosidase 2 (1108 aa).

Residues 1-9 (MLRIRRRFA) lie on the Cytoplasmic side of the membrane. The chain crosses the membrane as a helical; Signal-anchor for type II membrane protein span at residues 10-30 (LVICSGCLLVFLSLYIILNFA). Topologically, residues 31–1108 (APAATQIKPN…TAAYVSSHSS (1078 aa)) are lumenal. Residues 70–92 (AETSNRDDPIRPPLKVARSPRPG) are disordered. Zn(2+)-binding residues include His-153, Asp-155, Asp-267, and His-534. Asp-267 serves as the catalytic Nucleophile.

This sequence belongs to the glycosyl hydrolase 38 family. In terms of assembly, homodimer; disulfide-linked. It depends on Zn(2+) as a cofactor.

It is found in the golgi apparatus membrane. The catalysed reaction is N(4)-{beta-D-GlcNAc-(1-&gt;2)-alpha-D-Man-(1-&gt;3)-[alpha-D-Man-(1-&gt;3)-[alpha-D-Man-(1-&gt;6)]-alpha-D-Man-(1-&gt;6)]-beta-D-Man-(1-&gt;4)-beta-D-GlcNAc-(1-&gt;4)-beta-D-GlcNAc}-L-asparaginyl-[protein] + 2 H2O = 2 alpha-D-mannopyranose + an N(4)-{beta-D-GlcNAc-(1-&gt;2)-alpha-D-Man-(1-&gt;3)-[alpha-D-Man-(1-&gt;6)]-beta-D-Man-(1-&gt;4)-beta-D-GlcNAc-(1-&gt;4)-beta-D-GlcNAc}-L-asparaginyl-[protein]. It participates in protein modification; protein glycosylation. Functionally, catalyzes the first committed step in the biosynthesis of complex N-glycans. It controls conversion of high mannose to complex N-glycans; the final hydrolytic step in the N-glycan maturation pathway. The protein is Alpha-mannosidase 2 of Drosophila melanogaster (Fruit fly).